Consider the following 165-residue polypeptide: Crossover junction endodeoxyribonuclease RuvC (165 aa).

Active-site residues include Asp8, Glu69, and His141. The Mg(2+) site is built by Asp8, Glu69, and His141.

Belongs to the RuvC family. In terms of assembly, homodimer which binds Holliday junction (HJ) DNA. The HJ becomes 2-fold symmetrical on binding to RuvC with unstacked arms; it has a different conformation from HJ DNA in complex with RuvA. In the full resolvosome a probable DNA-RuvA(4)-RuvB(12)-RuvC(2) complex forms which resolves the HJ. It depends on Mg(2+) as a cofactor.

Its subcellular location is the cytoplasm. The catalysed reaction is Endonucleolytic cleavage at a junction such as a reciprocal single-stranded crossover between two homologous DNA duplexes (Holliday junction).. The RuvA-RuvB-RuvC complex processes Holliday junction (HJ) DNA during genetic recombination and DNA repair. Endonuclease that resolves HJ intermediates. Cleaves cruciform DNA by making single-stranded nicks across the HJ at symmetrical positions within the homologous arms, yielding a 5'-phosphate and a 3'-hydroxyl group; requires a central core of homology in the junction. The consensus cleavage sequence is 5'-(A/T)TT(C/G)-3'. Cleavage occurs on the 3'-side of the TT dinucleotide at the point of strand exchange. HJ branch migration catalyzed by RuvA-RuvB allows RuvC to scan DNA until it finds its consensus sequence, where it cleaves and resolves the cruciform DNA. This is Crossover junction endodeoxyribonuclease RuvC from Wolbachia pipientis subsp. Culex pipiens (strain wPip).